The sequence spans 438 residues: ATP-dependent RNA helicase sub2 (438 aa).

The segment covering 23–36 has biased composition (low complexity); that stretch reads TTAAPAANGAPAKT. Residues 23-42 form a disordered region; that stretch reads TTAAPAANGAPAKTGDLTVT. Residues 58–86 carry the Q motif motif; that stretch reads TGFRDFLLKGELLRAITDCGFEHPSEVCI. The region spanning 86-261 is the Helicase ATP-binding domain; sequence IPTAILNVDV…KKFMRNPLEV (176 aa). Position 99 to 106 (99 to 106) interacts with ATP; sequence AKSGLGKT. A DEAD box motif is present at residues 208-211; the sequence is DECD. One can recognise a Helicase C-terminal domain in the interval 289-434; it reads KLNDLLDNLE…EYPEGGVDSS (146 aa).

This sequence belongs to the DEAD box helicase family. DECD subfamily.

Its subcellular location is the nucleus. The catalysed reaction is ATP + H2O = ADP + phosphate + H(+). ATP-binding RNA helicase involved in transcription elongation and required for the export of mRNA out of the nucleus. SUB2 also plays a role in pre-mRNA splicing and spliceosome assembly. May be involved in rDNA and telomeric silencing, and maintenance of genome integrity. This chain is ATP-dependent RNA helicase sub2 (sub2), found in Aspergillus terreus (strain NIH 2624 / FGSC A1156).